The sequence spans 146 residues: Cytochrome c oxidase assembly factor 1 homolog (146 aa).

Residues 1 to 14 are Mitochondrial matrix-facing; the sequence is MMWQKYAGSRRSMP. Residues 15 to 37 traverse the membrane as a helical segment; the sequence is LGARILFHGVFYAGGFAIVYYLI. Over 38 to 146 the chain is Mitochondrial intermembrane; it reads QKFHSRALYY…GENGDEVKKE (109 aa).

It belongs to the COA1 family. As to quaternary structure, component of the MITRAC (mitochondrial translation regulation assembly intermediate of cytochrome c oxidase complex) complex, the core components of this complex being COA3/MITRAC12 and COX14. Interacts with COX17 and COA6. Part of the mitochondrial complex I assembly/MCIA complex that comprises at least the core subunits TMEM126B, NDUFAF1, ECSIT and ACAD9 and complement subunits such as COA1 and TMEM186.

It localises to the mitochondrion inner membrane. Functionally, component of the MITRAC (mitochondrial translation regulation assembly intermediate of cytochrome c oxidase complex) complex, that regulates cytochrome c oxidase assembly. MITRAC complexes regulate both translation of mitochondrial encoded components and assembly of nuclear-encoded components imported in mitochondrion. Required for assembly of mitochondrial respiratory chain complex I and complex IV. As part of the MCIA complex, required for efficient assembly of the mitochondrial complex I. This is Cytochrome c oxidase assembly factor 1 homolog from Homo sapiens (Human).